The chain runs to 78 residues: Keratin-associated protein 6-5 (78 aa).

The segment at 3–76 is 25 X 2 AA repeats of G-[YCGS]; sequence GYYGNYYGGR…GSGYGSGFGY (74 aa).

This sequence belongs to the KRTAP type 6 family. Interacts with hair keratins. Strong expression in narrowly defined pattern restricted to the lower and middle cortical regions of the hair shaft in both developing and cycling hair. During hair follicle regression (catagen), expression levels decrease until expression is no longer detectable in follicles at resting stage (telogen).

In the hair cortex, hair keratin intermediate filaments are embedded in an interfilamentous matrix, consisting of hair keratin-associated proteins (KRTAP), which are essential for the formation of a rigid and resistant hair shaft through their extensive disulfide bond cross-linking with abundant cysteine residues of hair keratins. The matrix proteins include the high-sulfur and high-glycine-tyrosine keratins. This Mus musculus (Mouse) protein is Keratin-associated protein 6-5 (Krtap6-5).